Here is a 598-residue protein sequence, read N- to C-terminus: UvrABC system protein C (598 aa).

The GIY-YIG domain maps to 14-91 (DQPGCYLMKD…IHKNNPKYNI (78 aa)). One can recognise a UVR domain in the interval 196 to 231 (TEIQDRLQEKMAYAAAHMEFEKAAEFRDQIKAIETV).

It belongs to the UvrC family. As to quaternary structure, interacts with UvrB in an incision complex.

The protein localises to the cytoplasm. In terms of biological role, the UvrABC repair system catalyzes the recognition and processing of DNA lesions. UvrC both incises the 5' and 3' sides of the lesion. The N-terminal half is responsible for the 3' incision and the C-terminal half is responsible for the 5' incision. This Enterococcus faecalis (strain ATCC 700802 / V583) protein is UvrABC system protein C.